The chain runs to 241 residues: Small ribosomal subunit protein uS2 (241 aa).

Belongs to the universal ribosomal protein uS2 family.

In Yersinia pestis bv. Antiqua (strain Antiqua), this protein is Small ribosomal subunit protein uS2.